Here is a 344-residue protein sequence, read N- to C-terminus: MAIQSSSSGSKPPAPKRLVAPEATAAEGDGGRDEGLRPRRLADYIGQSELKQVLGIAVEATRLRNDALDHVLLYGPPGLGKTTMALVLAEELGVSCRIASAPALERPRDIVGLLMNLQPRELLFIDEIHRLNRVAEELLYPAMEDFRLDLTVGAGPAARTRSLELPPFTLVGATTKAGSLSSPLRDRFGLIQRLEFYSCSDLEAIVSRSAQLLQLELAAEAAAEIARRCRGTPRIANRLLRRVRDFASVRGIAAVGAPVVVEALAMHRVDGRGLDPSDRRLLSLLETSYGGGPAGLDTLAAALGEDPDTLEAVVEPFLLQLGFLQRTPRGRVLTDAGRAHLEAA.

Over residues Met1–Ser10 the composition is skewed to low complexity. The interval Met1 to Arg37 is disordered. The tract at residues Pro13–Tyr197 is large ATPase domain (RuvB-L). ATP-binding positions include Leu36, Arg37, Gly78, Lys81, Thr82, Thr83, Glu144–Phe146, Arg187, Tyr197, and Arg234. Thr82 is a Mg(2+) binding site. A small ATPAse domain (RuvB-S) region spans residues Ser198–Arg268. The head domain (RuvB-H) stretch occupies residues Gly271–Ala344. The DNA site is built by Arg326 and Arg331.

This sequence belongs to the RuvB family. In terms of assembly, homohexamer. Forms an RuvA(8)-RuvB(12)-Holliday junction (HJ) complex. HJ DNA is sandwiched between 2 RuvA tetramers; dsDNA enters through RuvA and exits via RuvB. An RuvB hexamer assembles on each DNA strand where it exits the tetramer. Each RuvB hexamer is contacted by two RuvA subunits (via domain III) on 2 adjacent RuvB subunits; this complex drives branch migration. In the full resolvosome a probable DNA-RuvA(4)-RuvB(12)-RuvC(2) complex forms which resolves the HJ.

Its subcellular location is the cytoplasm. It catalyses the reaction ATP + H2O = ADP + phosphate + H(+). In terms of biological role, the RuvA-RuvB-RuvC complex processes Holliday junction (HJ) DNA during genetic recombination and DNA repair, while the RuvA-RuvB complex plays an important role in the rescue of blocked DNA replication forks via replication fork reversal (RFR). RuvA specifically binds to HJ cruciform DNA, conferring on it an open structure. The RuvB hexamer acts as an ATP-dependent pump, pulling dsDNA into and through the RuvAB complex. RuvB forms 2 homohexamers on either side of HJ DNA bound by 1 or 2 RuvA tetramers; 4 subunits per hexamer contact DNA at a time. Coordinated motions by a converter formed by DNA-disengaged RuvB subunits stimulates ATP hydrolysis and nucleotide exchange. Immobilization of the converter enables RuvB to convert the ATP-contained energy into a lever motion, pulling 2 nucleotides of DNA out of the RuvA tetramer per ATP hydrolyzed, thus driving DNA branch migration. The RuvB motors rotate together with the DNA substrate, which together with the progressing nucleotide cycle form the mechanistic basis for DNA recombination by continuous HJ branch migration. Branch migration allows RuvC to scan DNA until it finds its consensus sequence, where it cleaves and resolves cruciform DNA. The polypeptide is Holliday junction branch migration complex subunit RuvB (Synechococcus sp. (strain RCC307)).